A 373-amino-acid chain; its full sequence is GTPase Obg (373 aa).

One can recognise an Obg domain in the interval M1–L159. Residues L128–G147 form a disordered region. The OBG-type G domain occupies A160–S334. Residues G166 to S173, F191 to A195, D213 to G216, N284 to D287, and S315 to L317 each bind GTP. Mg(2+)-binding residues include S173 and T193. Residues F354–V373 form a disordered region. A compositionally biased stretch (low complexity) spans Q359–V373.

It belongs to the TRAFAC class OBG-HflX-like GTPase superfamily. OBG GTPase family. Monomer. Mg(2+) is required as a cofactor.

It is found in the cytoplasm. An essential GTPase which binds GTP, GDP and possibly (p)ppGpp with moderate affinity, with high nucleotide exchange rates and a fairly low GTP hydrolysis rate. Plays a role in control of the cell cycle, stress response, ribosome biogenesis and in those bacteria that undergo differentiation, in morphogenesis control. This chain is GTPase Obg, found in Paraburkholderia phytofirmans (strain DSM 17436 / LMG 22146 / PsJN) (Burkholderia phytofirmans).